Reading from the N-terminus, the 62-residue chain is Toxin Ct28 (62 aa).

Residues 1 to 22 form the signal peptide; sequence MKAFYGILIILLFCSMFKLNES. 3 disulfides stabilise this stretch: Cys-29–Cys-51, Cys-35–Cys-56, and Cys-39–Cys-58. Asn-61 carries the asparagine amide modification.

It belongs to the short scorpion toxin superfamily. Potassium channel inhibitor family. Alpha-KTx 02 subfamily. As to expression, expressed by the venom gland.

It localises to the secreted. In terms of biological role, blocks voltage-gated potassium channels. The sequence is that of Toxin Ct28 from Centruroides tecomanus (Scorpion).